We begin with the raw amino-acid sequence, 119 residues long: Large ribosomal subunit protein bL20c (119 aa).

It belongs to the bacterial ribosomal protein bL20 family.

The protein resides in the plastid. The protein localises to the chloroplast. Functionally, binds directly to 23S ribosomal RNA and is necessary for the in vitro assembly process of the 50S ribosomal subunit. It is not involved in the protein synthesizing functions of that subunit. The chain is Large ribosomal subunit protein bL20c (rpl20) from Pinus thunbergii (Japanese black pine).